The primary structure comprises 588 residues: ATP-dependent lipid A-core flippase (588 aa).

Helical transmembrane passes span phenylalanine 23–glycine 43, phenylalanine 56–threonine 76, aspartate 141–methionine 161, valine 162–valine 182, leucine 257–isoleucine 277, and threonine 278–methionine 298. Residues leucine 28–arginine 310 form the ABC transmembrane type-1 domain. One can recognise an ABC transporter domain in the interval isoleucine 342–valine 576. An ATP-binding site is contributed by glycine 375–threonine 382.

This sequence belongs to the ABC transporter superfamily. Lipid exporter (TC 3.A.1.106) family. In terms of assembly, homodimer.

It is found in the cell inner membrane. It catalyses the reaction ATP + H2O + lipid A-core oligosaccharideSide 1 = ADP + phosphate + lipid A-core oligosaccharideSide 2.. In terms of biological role, involved in lipopolysaccharide (LPS) biosynthesis. Translocates lipid A-core from the inner to the outer leaflet of the inner membrane. Transmembrane domains (TMD) form a pore in the inner membrane and the ATP-binding domain (NBD) is responsible for energy generation. The sequence is that of ATP-dependent lipid A-core flippase from Legionella pneumophila (strain Paris).